We begin with the raw amino-acid sequence, 3080 residues long: Protein PIEZO homolog (3080 aa).

6 consecutive transmembrane segments (helical) span residues 28-48, 57-77, 86-106, 113-133, 204-224, and 232-252; these read YIYFIFFLLSILCLPHKSLIL, PIITLVLSMFSLILQLLVNVV, LSVNILTAFGFYKYNSFWIVF, VIVFVISLFTIILWFKNLVYP, YPSIINVIYFVFTILIILLLA, and VMLKCYPILLITSLCHLLFVY. Asn276 is a glycosylation site (N-linked (GlcNAc...) asparagine). A helical transmembrane segment spans residues 285-305; sequence WPLVIGYITVLLLYISTCILF. N-linked (GlcNAc...) asparagine glycans are attached at residues Asn312 and Asn339. The next 2 helical transmembrane spans lie at 362–382 and 396–416; these read ILVVCFFLTASVASAILLASG and VIYIILLYFLVFISAQYIFNI. Asn434 is a glycosylation site (N-linked (GlcNAc...) asparagine). A helical membrane pass occupies residues 438-458; it reads WLYIGVQIVVSLTLSLYCFYS. The segment at 469 to 548 is disordered; the sequence is KKDQQSQQSQ…GGGIIRPRKP (80 aa). Residues 473 to 505 show a composition bias toward low complexity; sequence QSQQSQPQPQQQQQQQQSSQNNQIQQSPLQYQQ. Over residues 512-532 the composition is skewed to polar residues; the sequence is ISNKSLPSSPMSTKSTTVHIQ. Residues Asn514, Asn567, and Asn606 are each glycosylated (N-linked (GlcNAc...) asparagine). The next 3 helical transmembrane spans lie at 672–692, 700–720, and 740–760; these read GLTSINLLNAGYMLFFIVFVI, FWMCLIIYAQMVLLTLYIWQL, and YGSPLWVGLIWHIIIITFSII. Asn795 is a glycosylation site (N-linked (GlcNAc...) asparagine). Helical transmembrane passes span 827–847, 849–869, and 872–892; these read FCYLVIVIVSIFTKISLINIV, MATVFLCLLIHHISANGSIHI, and FWIIIILSQGVVLVARYIMQF. N-linked (GlcNAc...) asparagine glycosylation occurs at Asn918. Residues 928 to 948 traverse the membrane as a helical segment; the sequence is LFGCSSILVVCVFQLTVFFSI. The N-linked (GlcNAc...) asparagine glycan is linked to Asn992. 2 consecutive transmembrane segments (helical) span residues 1036–1056 and 1067–1087; these read FAISIAEYNFFNFIYLIMIVI and IGSFLLFYSQLWVLTQLAALL. A glycan (N-linked (GlcNAc...) asparagine) is linked at Asn1109. Residues 1158–1185 are disordered; that stretch reads QQQRKLEEHEEEYEEEEDQFGNKKNNDK. Acidic residues predominate over residues 1166–1176; it reads HEEEYEEEEDQ. N-linked (GlcNAc...) asparagine glycosylation is found at Asn1191, Asn1240, and Asn1251. The tract at residues 1199–1253 is disordered; that stretch reads DDGNNNNNNNNNNNNNNNNNNNNNNNNNNNNNNNNNNNNNNNQSNNENNENNNNS. Positions 1202-1252 are enriched in low complexity; that stretch reads NNNNNNNNNNNNNNNNNNNNNNNNNNNNNNNNNNNNNNNQSNNENNENNNN. The next 3 membrane-spanning stretches (helical) occupy residues 1281 to 1301, 1316 to 1336, and 1360 to 1380; these read VLAFALFWRLNILGMIYLIII, IYVSALLAPTILIQYLLILVV, and LLLLSIPDRYVLVIDFLVLFF. Residues Asn1424 and Asn1440 are each glycosylated (N-linked (GlcNAc...) asparagine). 2 consecutive transmembrane segments (helical) span residues 1472–1492 and 1519–1539; these read VILIVIFLAGTAECDILSCFY and IYNWLVLMAQIIFQVAVILYF. Residues Asn1559 and Asn1589 are each glycosylated (N-linked (GlcNAc...) asparagine). The helical transmembrane segment at 1619-1639 threads the bilayer; the sequence is IETGPLSISTISDVIIMVLLA. Residues 1704–1714 show a composition bias toward basic residues; it reads RINRRKNRHNH. Positions 1704–1812 are disordered; sequence RINRRKNRHN…NPLSNSSSTV (109 aa). A compositionally biased stretch (low complexity) spans 1715 to 1742; sequence YYNNNPNNNYNNNNNNNNSNSSNSNNNN. Residues Asn1731, Asn1734, Asn1763, Asn1768, Asn1771, Asn1779, Asn1807, and Asn1864 are each glycosylated (N-linked (GlcNAc...) asparagine). Polar residues predominate over residues 1762–1782; sequence KNTTNQNATNSTYSPFANSTM. A compositionally biased stretch (low complexity) spans 1789–1812; sequence NNNNNNNNNNNFNNNPLSNSSSTV. Disordered stretches follow at residues 1873–1899 and 1958–2032; these read LQQEQQQQQEQQQQLNPQQQQSQSSKE and SQLL…TSSS. Positions 1958-2021 are enriched in low complexity; sequence SQLLQQQQQQ…NNNNNNNNNN (64 aa). N-linked (GlcNAc...) asparagine glycosylation is present at Asn2027. 2 helical membrane passes run 2078–2098 and 2112–2132; these read IANGVFYNSIISLVYLLAVFL and FWRFMIGYSSLIICLKYVFQI. A glycan (N-linked (GlcNAc...) asparagine) is linked at Asn2148. Residues 2199–2219 traverse the membrane as a helical segment; the sequence is VFGLYIIDGHFISGAFWDLAI. The disordered stretch occupies residues 2277 to 2367; sequence LNNSPISLNS…NNNNNNNNNN (91 aa). N-linked (GlcNAc...) asparagine glycosylation is present at Asn2285. Residues 2288–2367 are compositionally biased toward low complexity; that stretch reads NNNNNNNNNN…NNNNNNNNNN (80 aa). A run of 2 helical transmembrane segments spans residues 2427-2447 and 2457-2477; these read IIIYPFKWLFVSIIEYVWLAI and YYMPLLFTDFACLFFLVIFPQ. An N-linked (GlcNAc...) asparagine glycan is attached at Asn2478. 4 consecutive transmembrane segments (helical) span residues 2500-2520, 2530-2550, 2553-2573, and 2671-2691; these read YIVILLAQFGVIILDRIIYLY, QIVLTVLYHVFLFFYFPDLIV, FSFGYTWPLVVFYLMKCIYLY, and FVTGVTFFIGLVILLWFPLII. Residues Asn2762, Asn2790, Asn2837, Asn2840, Asn2848, Asn2858, Asn2908, Asn2913, and Asn2935 are each glycosylated (N-linked (GlcNAc...) asparagine). The segment at 2835–2863 is disordered; it reads QSNNSNNSNNPNENSSSGSDDNNNNSNNN. Residues 2836-2863 show a composition bias toward low complexity; it reads SNNSNNSNNPNENSSSGSDDNNNNSNNN. The helical transmembrane segment at 2955–2975 threads the bilayer; it reads ITSTLVSAGIIGLYVSVVLSV. The segment at 3054–3080 is disordered; sequence PTINSTLNNQNNQNNNNNNNNNHEKIN. The N-linked (GlcNAc...) asparagine glycan is linked to Asn3057. A compositionally biased stretch (low complexity) spans 3061–3074; that stretch reads NNQNNQNNNNNNNN.

The protein belongs to the PIEZO (TC 1.A.75) family.

The protein resides in the membrane. The polypeptide is Protein PIEZO homolog (Dictyostelium discoideum (Social amoeba)).